The primary structure comprises 157 residues: Protein-export protein SecB (157 aa).

This sequence belongs to the SecB family. Homotetramer, a dimer of dimers. One homotetramer interacts with 1 SecA dimer.

The protein localises to the cytoplasm. Its function is as follows. One of the proteins required for the normal export of preproteins out of the cell cytoplasm. It is a molecular chaperone that binds to a subset of precursor proteins, maintaining them in a translocation-competent state. It also specifically binds to its receptor SecA. This chain is Protein-export protein SecB, found in Alcanivorax borkumensis (strain ATCC 700651 / DSM 11573 / NCIMB 13689 / SK2).